The chain runs to 968 residues: uncharacterized protein (968 aa).

5 disordered regions span residues 124 to 177 (SSIS…FSFP), 348 to 437 (QEDS…VNDS), 572 to 595 (TTTTTITQQQQQQQQQQQQQQQNT), 608 to 627 (PKASNKLANNSNGKKVGSSK), and 837 to 877 (KASK…KKGK). A compositionally biased stretch (polar residues) spans 131-157 (TIESNYLSNPSSPCQSTPILESSTPFS). Low complexity-rich tracts occupy residues 158-177 (QKLMSNEQQQQQQPQNFSFP), 352-431 (NNNN…NCNN), and 572-593 (TTTTTITQQQQQQQQQQQQQQQ). Over residues 841–857 (DSSSSPTASSAAPGDSS) the composition is skewed to low complexity.

This is an uncharacterized protein from Dictyostelium discoideum (Social amoeba).